Here is a 166-residue protein sequence, read N- to C-terminus: MSGYSAPRRISDADDVTSFSSGEPSLDDYLRKRALANHVQGGSRCFVTCRDGRVVGFYALASGSVAHADAPGRVRRNMPDPVPVILLSRLAVDRKEQGRGLGSHLLRDAIGRCVQAADSIGLRAILVHALHDEARAFYVHFDFEISPTDPLHLMLLMKDARALIGD.

Residues 1 to 22 (MSGYSAPRRISDADDVTSFSSG) are disordered. Residues 1-162 (MSGYSAPRRI…LMLLMKDARA (162 aa)) form the N-acetyltransferase domain. Tyr138 is an active-site residue.

Belongs to the acetyltransferase family. GNAT subfamily. In terms of assembly, homodimer, forms a complex with cognate antitoxin TacA.

The enzyme catalyses glycyl-tRNA(Gly) + acetyl-CoA = N-acetylglycyl-tRNA(Gly) + CoA + H(+). Toxic component of a type II toxin-antitoxin (TA) system. Overexpression of this gene alone in M.smegmatis inhibits growth, while overexpression of the tacA-tacT operon does not. Acetylates glycyl-tRNA(Gly) but not other tRNAs, blocks in vitro translation in the presence, but not absence, of acetyl-coenzyme A. Peptidyl-tRNA hydrolase (pth) counteracts the product of this enzyme in vitro. Neutralized by cognate antitoxin TacA. Does not seem to be active in laboratory growth conditions. Its function is as follows. TacA-TacT both represses and derepresses expression of its own operon. This Mycobacterium tuberculosis (strain ATCC 25618 / H37Rv) protein is tRNA-acetylating toxin.